Here is a 434-residue protein sequence, read N- to C-terminus: Adenylosuccinate synthetase (434 aa).

Residues 22-28 (GDEGKGK) and 50-52 (GHT) contribute to the GTP site. Aspartate 23 serves as the catalytic Proton acceptor. Residues aspartate 23 and glycine 50 each coordinate Mg(2+). IMP-binding positions include 23–26 (DEGK), 48–51 (NAGH), threonine 139, arginine 153, glutamine 234, threonine 249, and arginine 313. The Proton donor role is filled by histidine 51. Residue 309–315 (ATTGRKR) coordinates substrate. GTP-binding positions include arginine 315, 341-343 (KLD), and 423-425 (SVG).

Belongs to the adenylosuccinate synthetase family. Homodimer. The cofactor is Mg(2+).

The protein resides in the cytoplasm. The enzyme catalyses IMP + L-aspartate + GTP = N(6)-(1,2-dicarboxyethyl)-AMP + GDP + phosphate + 2 H(+). Its pathway is purine metabolism; AMP biosynthesis via de novo pathway; AMP from IMP: step 1/2. Functionally, plays an important role in the de novo pathway of purine nucleotide biosynthesis. Catalyzes the first committed step in the biosynthesis of AMP from IMP. This Chlorobium luteolum (strain DSM 273 / BCRC 81028 / 2530) (Pelodictyon luteolum) protein is Adenylosuccinate synthetase.